The sequence spans 396 residues: 1-deoxy-D-xylulose 5-phosphate reductoisomerase (396 aa).

T10, G11, S12, I13, N38, and N123 together coordinate NADPH. K124 contacts 1-deoxy-D-xylulose 5-phosphate. E125 is a binding site for NADPH. A Mn(2+)-binding site is contributed by D149. 1-deoxy-D-xylulose 5-phosphate contacts are provided by S150, E151, S185, and H208. Position 151 (E151) interacts with Mn(2+). G214 contributes to the NADPH binding site. 4 residues coordinate 1-deoxy-D-xylulose 5-phosphate: S221, N226, K227, and E230. Residue E230 participates in Mn(2+) binding.

It belongs to the DXR family. Mg(2+) is required as a cofactor. Mn(2+) serves as cofactor.

The catalysed reaction is 2-C-methyl-D-erythritol 4-phosphate + NADP(+) = 1-deoxy-D-xylulose 5-phosphate + NADPH + H(+). It participates in isoprenoid biosynthesis; isopentenyl diphosphate biosynthesis via DXP pathway; isopentenyl diphosphate from 1-deoxy-D-xylulose 5-phosphate: step 1/6. In terms of biological role, catalyzes the NADPH-dependent rearrangement and reduction of 1-deoxy-D-xylulose-5-phosphate (DXP) to 2-C-methyl-D-erythritol 4-phosphate (MEP). This Shewanella piezotolerans (strain WP3 / JCM 13877) protein is 1-deoxy-D-xylulose 5-phosphate reductoisomerase.